We begin with the raw amino-acid sequence, 65 residues long: Conotoxin Bu19 (65 aa).

An N-terminal signal peptide occupies residues 1–21 (MGMRMVFTVFLLVVLATTVVS). A propeptide spanning residues 22-48 (FTSDRASDGRNAAANDKASDLAALAVR) is cleaved from the precursor. Cystine bridges form between Cys-50/Cys-56 and Cys-51/Cys-64. Position 64 is a cysteine amide (Cys-64).

The protein belongs to the conotoxin A superfamily. In terms of tissue distribution, expressed by the venom duct.

The protein resides in the secreted. The polypeptide is Conotoxin Bu19 (Conus bullatus (Bubble cone)).